A 455-amino-acid chain; its full sequence is EP1-like glycoprotein 1 (455 aa).

Residues 1–22 (MLRFDYLLITALAISTVSVVMA) form the signal peptide. The Bulb-type lectin domain occupies 43-163 (TEYDASYRFL…HGKFVWQSFD (121 aa)). Residues N106, N191, N211, N241, and N289 are each glycosylated (N-linked (GlcNAc...) asparagine). C374 bears the S-nitrosocysteine mark. The region spanning 374–455 (CSGGKGKAVN…NTSSVAYIKY (82 aa)) is the PAN domain. 2 disulfides stabilise this stretch: C410/C432 and C414/C420. N446 carries N-linked (GlcNAc...) asparagine glycosylation.

The protein localises to the secreted. The protein resides in the cell wall. The protein is EP1-like glycoprotein 1 of Arabidopsis thaliana (Mouse-ear cress).